Consider the following 104-residue polypeptide: Large ribosomal subunit protein uL23 (104 aa).

Belongs to the universal ribosomal protein uL23 family. In terms of assembly, part of the 50S ribosomal subunit. Contacts protein L29, and trigger factor when it is bound to the ribosome.

Functionally, one of the early assembly proteins it binds 23S rRNA. One of the proteins that surrounds the polypeptide exit tunnel on the outside of the ribosome. Forms the main docking site for trigger factor binding to the ribosome. This Cupriavidus metallidurans (strain ATCC 43123 / DSM 2839 / NBRC 102507 / CH34) (Ralstonia metallidurans) protein is Large ribosomal subunit protein uL23.